The sequence spans 83 residues: Small ribosomal subunit protein uS17 (83 aa).

It belongs to the universal ribosomal protein uS17 family. In terms of assembly, part of the 30S ribosomal subunit.

Its function is as follows. One of the primary rRNA binding proteins, it binds specifically to the 5'-end of 16S ribosomal RNA. The polypeptide is Small ribosomal subunit protein uS17 (Ehrlichia chaffeensis (strain ATCC CRL-10679 / Arkansas)).